A 102-amino-acid polypeptide reads, in one-letter code: Legumin-like protein Mac i 2 (102 aa).

This sequence belongs to the 11S seed storage protein (globulins) family.

In terms of biological role, seed storage protein. This Macadamia integrifolia (Macadamia nut) protein is Legumin-like protein Mac i 2.